We begin with the raw amino-acid sequence, 297 residues long: Tumor necrosis factor receptor superfamily member 27 (297 aa).

Over 1–138 (MDCQENEYWD…TPTVPPQEAT (138 aa)) the chain is Extracellular. TNFR-Cys repeat units lie at residues 2 to 41 (DCQE…DAYC), 43 to 83 (ACPP…NAVC), and 85 to 118 (DCLP…EVQC). Cystine bridges form between cysteine 3/cysteine 15, cysteine 18/cysteine 31, cysteine 21/cysteine 41, cysteine 44/cysteine 58, cysteine 61/cysteine 75, cysteine 64/cysteine 83, cysteine 86/cysteine 104, and cysteine 107/cysteine 118. N-linked (GlcNAc...) asparagine glycosylation is present at asparagine 74. A helical; Signal-anchor for type III membrane protein transmembrane segment spans residues 139–159 (LVALVSSLLVVFTLAFLGLFF). Residues 160 to 297 (LYCKQFFNRH…LNVPFEVPSP (138 aa)) lie on the Cytoplasmic side of the membrane. Polar residues predominate over residues 272–281 (ETLGGNTVES). The segment at 272 to 297 (ETLGGNTVESTGDRLELNVPFEVPSP) is disordered.

In terms of assembly, associates with TRAF1, TRAF3 and TRAF6.

It is found in the membrane. Functionally, receptor for EDA isoform A2, but not for EDA isoform A1. Mediates the activation of the NF-kappa-B and JNK pathways. Activation seems to be mediated by binding to TRAF3 and TRAF6. In Homo sapiens (Human), this protein is Tumor necrosis factor receptor superfamily member 27 (EDA2R).